We begin with the raw amino-acid sequence, 168 residues long: 3-hydroxyacyl-[acyl-carrier-protein] dehydratase FabZ (168 aa).

H54 is a catalytic residue.

This sequence belongs to the thioester dehydratase family. FabZ subfamily.

It localises to the cytoplasm. The catalysed reaction is a (3R)-hydroxyacyl-[ACP] = a (2E)-enoyl-[ACP] + H2O. Involved in unsaturated fatty acids biosynthesis. Catalyzes the dehydration of short chain beta-hydroxyacyl-ACPs and long chain saturated and unsaturated beta-hydroxyacyl-ACPs. The chain is 3-hydroxyacyl-[acyl-carrier-protein] dehydratase FabZ from Yersinia enterocolitica serotype O:8 / biotype 1B (strain NCTC 13174 / 8081).